The following is an 880-amino-acid chain: Paramyosin (880 aa).

Residues 1 to 34 form a nonhelical region region; that stretch reads MSGSLYRSPSAALYKSPSMSAFGGLPAAFGSMSV. A coiled-coil region spans residues 35-859; sequence ADLGSLTRLE…LIRAKHRHQL (825 aa). A nonhelical region region spans residues 860–880; that stretch reads LRAKMLQRQKFTFSKMSNRDN.

This sequence belongs to the paramyosin family. As to quaternary structure, homodimer.

It localises to the cytoplasm. It is found in the myofibril. Functionally, paramyosin is a major structural component of many thick filaments isolated from invertebrate muscles. The sequence is that of Paramyosin from Brugia malayi (Filarial nematode worm).